The chain runs to 392 residues: MPLNMNKYLTDAYTGGIIKKYPEDFIVEEITPEGIILEVGKSIEFKDEENWKGNYIHFTLEKRNWTTLDAIREIANRVGKQRKHFGFAGNKDKYAVTTQRVGCFNVKLEDLMKVKIKGIILRDFQKTNRKIRLGDLWGNRFTIRVREPELKGKELEEALNKLCKLKYFLNYYGVQRFGTTRPITHIVGRFIIERDWEGAFHAYCGTPLPYDDKKSKLARELVDEENFKEAYKKFPKAFFYERRMIKAYIETGSYQKAFMILPPYLRCMFINAYQSYLFNEIINRRFEYGFEPMEGDILIDNVPSGALFGYKTRFASGIQGEIEREIYERENLSPEDFKIGEFGSFIGDRRAMIGKIYNMKYWIEDDSYVLQFCLKKGNYATSVLREFIEKKD.

The active-site Nucleophile is aspartate 92. In terms of domain architecture, TRUD spans 167 to 354 (YFLNYYGVQR…FIGDRRAMIG (188 aa)).

Belongs to the pseudouridine synthase TruD family.

The catalysed reaction is uridine(13) in tRNA = pseudouridine(13) in tRNA. Its function is as follows. Could be responsible for synthesis of pseudouridine from uracil-13 in transfer RNAs. In Methanocaldococcus jannaschii (strain ATCC 43067 / DSM 2661 / JAL-1 / JCM 10045 / NBRC 100440) (Methanococcus jannaschii), this protein is Probable tRNA pseudouridine synthase D 1.